Consider the following 272-residue polypeptide: Orotidine 5'-phosphate decarboxylase (272 aa).

Catalysis depends on Lys-93, which acts as the Proton donor.

This sequence belongs to the OMP decarboxylase family. Type 2 subfamily.

It catalyses the reaction orotidine 5'-phosphate + H(+) = UMP + CO2. The protein operates within pyrimidine metabolism; UMP biosynthesis via de novo pathway; UMP from orotate: step 2/2. This Roseiflexus castenholzii (strain DSM 13941 / HLO8) protein is Orotidine 5'-phosphate decarboxylase.